A 234-amino-acid chain; its full sequence is Inosine triphosphate pyrophosphatase (234 aa).

11–16 serves as a coordination point for ITP; the sequence is SGNKGK. Glu40 contributes to the Mg(2+) binding site. ITP contacts are provided by residues Lys53, 81-82, Lys98, 176-179, Lys203, and 208-209; these read DT, FGWD, and HR.

The protein belongs to the HAM1 NTPase family. As to quaternary structure, homodimer. The cofactor is Mg(2+). Mn(2+) serves as cofactor.

It is found in the cytoplasm. It catalyses the reaction ITP + H2O = IMP + diphosphate + H(+). The catalysed reaction is dITP + H2O = dIMP + diphosphate + H(+). It carries out the reaction XTP + H2O = XMP + diphosphate + H(+). Pyrophosphatase that hydrolyzes non-canonical purine nucleotides such as inosine triphosphate (ITP), deoxyinosine triphosphate (dITP) or xanthosine 5'-triphosphate (XTP) to their respective monophosphate derivatives. The enzyme does not distinguish between the deoxy- and ribose forms. Probably excludes non-canonical purines from RNA and DNA precursor pools, thus preventing their incorporation into RNA and DNA and avoiding chromosomal lesions. The chain is Inosine triphosphate pyrophosphatase from Leishmania major.